Consider the following 132-residue polypeptide: U11/U12 small nuclear ribonucleoprotein 25 kDa protein (132 aa).

The Ubiquitin-like domain maps to 41-132 (MTVRVCKMDG…VSFIKKLRQK (92 aa)).

As to quaternary structure, component of the U11/U12 snRNPs that are part of the U12-type spliceosome.

Its subcellular location is the nucleus. This Homo sapiens (Human) protein is U11/U12 small nuclear ribonucleoprotein 25 kDa protein (SNRNP25).